The primary structure comprises 180 residues: Large ribosomal subunit protein uL15 (180 aa).

A disordered region spans residues 1 to 62 (MKKERLEQAS…KTAGRGSKGQ (62 aa)).

It belongs to the universal ribosomal protein uL15 family. Part of the 50S ribosomal subunit.

Binds to the 23S rRNA. This Leptospira interrogans serogroup Icterohaemorrhagiae serovar copenhageni (strain Fiocruz L1-130) protein is Large ribosomal subunit protein uL15.